Consider the following 180-residue polypeptide: Bifunctional protein PyrR (180 aa).

A PRPP-binding motif is present at residues 101-113 (VILVDDVLYTGRT).

The protein belongs to the purine/pyrimidine phosphoribosyltransferase family. PyrR subfamily. In terms of assembly, homodimer and homohexamer; in equilibrium.

It catalyses the reaction UMP + diphosphate = 5-phospho-alpha-D-ribose 1-diphosphate + uracil. Its function is as follows. Regulates transcriptional attenuation of the pyrimidine nucleotide (pyr) operon by binding in a uridine-dependent manner to specific sites on pyr mRNA. This disrupts an antiterminator hairpin in the RNA and favors formation of a downstream transcription terminator, leading to a reduced expression of downstream genes. In terms of biological role, also displays a weak uracil phosphoribosyltransferase activity which is not physiologically significant. The polypeptide is Bifunctional protein PyrR (Bacillus mycoides (strain KBAB4) (Bacillus weihenstephanensis)).